The sequence spans 248 residues: Triosephosphate isomerase (248 aa).

Lysine 12 lines the substrate pocket. Histidine 94 (electrophile) is an active-site residue. The active-site Proton acceptor is glutamate 165.

Belongs to the triosephosphate isomerase family. As to quaternary structure, homodimer.

It carries out the reaction D-glyceraldehyde 3-phosphate = dihydroxyacetone phosphate. It participates in carbohydrate biosynthesis; gluconeogenesis. The protein operates within carbohydrate degradation; glycolysis; D-glyceraldehyde 3-phosphate from glycerone phosphate: step 1/1. This Bombyx mori (Silk moth) protein is Triosephosphate isomerase (Tpi).